Reading from the N-terminus, the 885-residue chain is Translation initiation factor IF-2 (885 aa).

The tract at residues 1–295 (MTDNKDDKTI…EKFKRSQMQE (295 aa)) is disordered. Positions 63 to 77 (PVAAAPAAARPAEQR) are enriched in low complexity. Over residues 78 to 94 (PMPPQPSGRPAPQPQPH) the composition is skewed to pro residues. Positions 130–183 (RDAEEAKRRAEEEVRRRREEEERIAREKEEAARRAAEEAARPAVEAEKVEEKVE) are enriched in basic and acidic residues. The span at 184–201 (AATPAVAETRPLSERPAP) shows a compositional bias: low complexity. In terms of domain architecture, tr-type G spans 383–550 (ARPPIVTIMG…AILLQSEILD (168 aa)). The interval 392–399 (GHVDHGKT) is G1. GTP is bound at residue 392–399 (GHVDHGKT). The interval 417-421 (GITQH) is G2. Positions 438 to 441 (DTPG) are G3. GTP is bound by residues 438–442 (DTPGH) and 492–495 (NKID). The tract at residues 492 to 495 (NKID) is G4. Residues 528–530 (SAK) form a G5 region.

This sequence belongs to the TRAFAC class translation factor GTPase superfamily. Classic translation factor GTPase family. IF-2 subfamily.

It localises to the cytoplasm. Its function is as follows. One of the essential components for the initiation of protein synthesis. Protects formylmethionyl-tRNA from spontaneous hydrolysis and promotes its binding to the 30S ribosomal subunits. Also involved in the hydrolysis of GTP during the formation of the 70S ribosomal complex. This Sinorhizobium medicae (strain WSM419) (Ensifer medicae) protein is Translation initiation factor IF-2.